The sequence spans 526 residues: MDTESTYSGYSYYSSHSKKSHRQGERTRERHKSPRNKDGRGSEKSVTIQAPAGEPLLANDSARTGAEEVQDDNWGETTTAITGTSEHSISQEDIARISKDMEDSVGLDCKRYLGLTVASFLGLLVFLTPIAFILLPQILWREELKPCGAICEGLLISVSFKLLILLIGTWALFFRKQRADVPRVFVFRALLLVLIFLFVVSYWLFYGVRILDSRDQNYKDIVQYAVSLVDALLFIHYLAIVLLELRQLQPMFTLQVVRSTDGESRFYSLGHLSIQRAALVVLENYYKDFTIYNPNLLTASKFRAAKHMAGLKVYNVDGPSNNATGQSRAMIAAAARRRDSSHNELYYEEAEHERRVKKRRARLVVAVEEAFIHIQRLQAEEQQKSPGEVMDPREAAQAIFPSMARALQKYLRTTRQQHYHSMESILQHLAFCITNSMTPKAFLERYLSAGPTLQYDKDRWLSTQWRLISEEAVTNGLRDGIVFVLKCLDFSLVVNVKKIPFIVLSEEFIDPKSHKFVLRLQSETSV.

Over residues 1–15 the composition is skewed to low complexity; it reads MDTESTYSGYSYYSS. The disordered stretch occupies residues 1 to 87; that stretch reads MDTESTYSGY…TTAITGTSEH (87 aa). Topologically, residues 1–114 are cytoplasmic; the sequence is MDTESTYSGY…VGLDCKRYLG (114 aa). The segment covering 75–87 has biased composition (polar residues); the sequence is GETTTAITGTSEH. Residues serine 88 and serine 90 each carry the phosphoserine modification. Residues 115-135 traverse the membrane as a helical segment; it reads LTVASFLGLLVFLTPIAFILL. Residues 136-153 lie on the Extracellular side of the membrane; that stretch reads PQILWREELKPCGAICEG. Residues 154–174 traverse the membrane as a helical segment; the sequence is LLISVSFKLLILLIGTWALFF. Over 175-184 the chain is Cytoplasmic; that stretch reads RKQRADVPRV. The helical transmembrane segment at 185–205 threads the bilayer; sequence FVFRALLLVLIFLFVVSYWLF. Over 206-224 the chain is Extracellular; the sequence is YGVRILDSRDQNYKDIVQY. The chain crosses the membrane as a helical span at residues 225–245; the sequence is AVSLVDALLFIHYLAIVLLEL. At 246-526 the chain is on the cytoplasmic side; that stretch reads RQLQPMFTLQ…VLRLQSETSV (281 aa).

It belongs to the Vang family. Heterodimer with Vangl2. Interacts through its C-terminal region with the N-terminal half of DVL1, DVL2 and DVL3. The PDZ domain of DVL1, DVL2 and DVL3 is required for the interaction.

It localises to the cell membrane. This chain is Vang-like protein 1 (Vangl1), found in Mus musculus (Mouse).